The sequence spans 298 residues: Pyruvate synthase subunit PorB (298 aa).

4 residues coordinate [4Fe-4S] cluster: Cys-19, Cys-22, Cys-47, and Cys-218.

Heterotetramer of one alpha, one beta, one delta and one gamma chain. [4Fe-4S] cluster is required as a cofactor.

The enzyme catalyses 2 oxidized [2Fe-2S]-[ferredoxin] + pyruvate + CoA = 2 reduced [2Fe-2S]-[ferredoxin] + acetyl-CoA + CO2 + H(+). This Methanocaldococcus jannaschii (strain ATCC 43067 / DSM 2661 / JAL-1 / JCM 10045 / NBRC 100440) (Methanococcus jannaschii) protein is Pyruvate synthase subunit PorB (porB).